Consider the following 127-residue polypeptide: Histone H2B type 1-A (127 aa).

At Pro2 the chain carries N-acetylproline. 7 positions are modified to N6-acetyllysine; alternate: Lys7, Lys13, Lys14, Lys17, Lys18, Lys22, and Lys25. 8 positions are modified to N6-crotonyllysine; alternate: Lys7, Lys13, Lys14, Lys17, Lys18, Lys22, Lys25, and Lys36. 2 positions are modified to N6-lactoyllysine; alternate: Lys7 and Lys13. Residue Lys7 forms a Glycyl lysine isopeptide (Lys-Gly) (interchain with G-Cter in SUMO2); alternate linkage. N6-lactoyllysine; alternate is present on residues Lys17, Lys18, Lys22, and Lys25. A Glycyl lysine isopeptide (Lys-Gly) (interchain with G-Cter in SUMO2); alternate cross-link involves residue Lys22. An N6-succinyllysine; alternate modification is found at Lys36. Residue Lys36 forms a Glycyl lysine isopeptide (Lys-Gly) (interchain with G-Cter in ubiquitin); alternate linkage. Phosphoserine is present on Ser38. Lys45 is modified (N6-lactoyllysine; alternate). Lys48 is subject to N6-methyllysine. At Lys59 the chain carries N6,N6-dimethyllysine. Residue Arg81 is modified to Dimethylated arginine. At Lys87 the chain carries N6-acetyllysine; alternate. At Lys87 the chain carries N6-lactoyllysine; alternate. Lys87 carries the N6,N6,N6-trimethyllysine; alternate modification. Omega-N-methylarginine occurs at positions 88 and 94. Residue Lys110 is modified to N6-lactoyllysine; alternate. Lys110 carries the post-translational modification N6-methyllysine. Residue Thr117 is modified to Phosphothreonine. Lys118 and Lys122 each carry N6-lactoyllysine; alternate. Lys118 and Lys122 each carry N6-succinyllysine; alternate. N6-methylated lysine; alternate is present on Lys118. Lys122 participates in a covalent cross-link: Glycyl lysine isopeptide (Lys-Gly) (interchain with G-Cter in ubiquitin); alternate.

It belongs to the histone H2B family. The nucleosome is a histone octamer containing two molecules each of H2A, H2B, H3 and H4 assembled in one H3-H4 heterotetramer and two H2A-H2B heterodimers. Interacts with H2AB1; preferentially dimerizes with H2AB1 to form nucleosomes. Monoubiquitination at Lys-36 by the MSL1/MSL2 dimer is required for histone H3 'Lys-4' (H3K4me) and 'Lys-79' (H3K79me) methylation and transcription activation at specific gene loci, such as HOXA9 and MEIS1 loci. Similarly, monoubiquitination of Lys-122 (H2BK120Ub) by the RNF20/40 complex gives a specific tag for epigenetic transcriptional activation and is also prerequisite for histone H3 'Lys-4' and 'Lys-79' methylation. It also functions cooperatively with the FACT dimer to stimulate elongation by RNA polymerase II. H2BK120Ub also acts as a regulator of mRNA splicing: deubiquitination by USP49 is required for efficient cotranscriptional splicing of a large set of exons. In terms of processing, crotonylation (Kcr) is specifically present in male germ cells and marks testis-specific genes in post-meiotic cells, including X-linked genes that escape sex chromosome inactivation in haploid cells. Crotonylation marks active promoters and enhancers and confers resistance to transcriptional repressors. It is also associated with post-meiotically activated genes on autosomes. Post-translationally, acetylated during spermatogenesis. Acetylated form is most abundant in spermatogonia compared to spermatocytes and round spermatids. Phosphorylated at Thr-117 in spermatogonia, spermatocytes and round spermatids. In terms of processing, methylated at Lys-118 in spermatogonia, spermatocytes and round spermatids. Post-translationally, lactylated in macrophages by EP300/P300 by using lactoyl-CoA directly derived from endogenous or exogenous lactate, leading to stimulates gene transcription. As to expression, mainly expressed in testis, and the corresponding protein is also present in mature sperm. Also present in metaphase oocytes (at protein level).

The protein resides in the nucleus. The protein localises to the chromosome. Variant histone specifically required to direct the transformation of dissociating nucleosomes to protamine in male germ cells. Entirely replaces classical histone H2B prior nucleosome to protamine transition and probably acts as a nucleosome dissociating factor that creates a more dynamic chromatin, facilitating the large-scale exchange of histones. In condensing spermatids, the heterodimer between H2AB1 and H2BC1/TH2B is loaded onto the nucleosomes and promotes loading of transition proteins (TNP1 and TNP2) onto the nucleosomes. Inclusion of the H2AB1-H2BC1/TH2B dimer into chromatin opens the nucleosomes, releasing the nucleosomal DNA ends and allowing the invasion of nucleosomes by transition proteins (TNP1 and TNP2). Then, transition proteins drive the recruitment and processing of protamines, which are responsible for histone eviction. Also expressed maternally and is present in the female pronucleus, suggesting a similar role in protamine replacement by nucleosomes at fertilization. Core component of nucleosome. Nucleosomes wrap and compact DNA into chromatin, limiting DNA accessibility to the cellular machineries which require DNA as a template. Histones thereby play a central role in transcription regulation, DNA repair, DNA replication and chromosomal stability. DNA accessibility is regulated via a complex set of post-translational modifications of histones, also called histone code, and nucleosome remodeling. The polypeptide is Histone H2B type 1-A (Mus musculus (Mouse)).